A 165-amino-acid chain; its full sequence is Probable bacterial non-heme ferritin-like protein (165 aa).

The Ferritin-like diiron domain occupies 1-145 (MLSENVVKLL…SILDKLNFLG (145 aa)). Fe cation-binding residues include Glu-17, Glu-50, His-53, Glu-94, and Gln-127.

The protein belongs to the ferritin family. Prokaryotic subfamily.

It is found in the cytoplasm. This chain is Probable bacterial non-heme ferritin-like protein (ftnB), found in Haemophilus influenzae (strain ATCC 51907 / DSM 11121 / KW20 / Rd).